The primary structure comprises 396 residues: Elongation factor Tu 2 (396 aa).

The tr-type G domain maps to 10 to 206 (KPHCNIGTIG…AVDAYIPQPE (197 aa)). Positions 19 to 26 (GHVDHGKT) are G1. 19–26 (GHVDHGKT) serves as a coordination point for GTP. T26 provides a ligand contact to Mg(2+). A G2 region spans residues 60–64 (GITIS). The tract at residues 81 to 84 (DCPG) is G3. GTP is bound by residues 81–85 (DCPGH) and 136–139 (NKCD). Positions 136-139 (NKCD) are G4. The tract at residues 174–176 (SAL) is G5.

This sequence belongs to the TRAFAC class translation factor GTPase superfamily. Classic translation factor GTPase family. EF-Tu/EF-1A subfamily. In terms of assembly, monomer.

Its subcellular location is the cytoplasm. It catalyses the reaction GTP + H2O = GDP + phosphate + H(+). In terms of biological role, GTP hydrolase that promotes the GTP-dependent binding of aminoacyl-tRNA to the A-site of ribosomes during protein biosynthesis. The chain is Elongation factor Tu 2 from Rhodopseudomonas palustris (strain BisB5).